The primary structure comprises 392 residues: Protein O-glucosyltransferase 1 (392 aa).

Positions 1–23 are cleaved as a signal peptide; that stretch reads MERLSGCRLRPWMLLLLLFPVQG. 4 disulfides stabilise this stretch: Cys-49/Cys-56, Cys-54/Cys-357, Cys-102/Cys-108, and Cys-263/Cys-286. Asn-53 is a glycosylation site (N-linked (GlcNAc...) asparagine). The tract at residues 103–107 is interaction with the consensus sequence C-X-S-X-[PA]-C in peptide substrates; that stretch reads MFPSR. Asp-133 (proton donor/acceptor) is an active-site residue. The segment at 172–178 is interaction with the consensus sequence C-X-S-X-[PA]-C in peptide substrates; it reads AVWPLYP. Tyr-177 serves as a coordination point for UDP-alpha-D-glucose. N-linked (GlcNAc...) asparagine glycosylation occurs at Asn-204. UDP-alpha-D-glucose-binding positions include Ser-212, Arg-218, and 274 to 279; that span reads VAASFR. The N-linked (GlcNAc...) asparagine glycan is linked to Asn-373. The Prevents secretion from ER motif lies at 389–392; it reads KTEL.

It belongs to the glycosyltransferase 90 family.

The protein resides in the endoplasmic reticulum lumen. The catalysed reaction is L-seryl-[EGF-like domain protein] + UDP-alpha-D-xylose = 3-O-(beta-D-xylosyl)-L-seryl-[EGF-like domain protein] + UDP + H(+). It carries out the reaction L-seryl-[EGF-like domain protein] + UDP-alpha-D-glucose = 3-O-(beta-D-glucosyl)-L-seryl-[EGF-like domain protein] + UDP + H(+). Its pathway is protein modification; protein glycosylation. In terms of biological role, dual specificity glycosyltransferase that catalyzes the transfer of glucose and xylose from UDP-glucose and UDP-xylose, respectively, to a serine residue found in the consensus sequence of C-X-S-X-P-C. Specifically targets extracellular EGF repeats of protein such as CRB2, F7, F9 and NOTCH2. Acts as a positive regulator of Notch signaling by mediating O-glucosylation of Notch, leading to regulate muscle development. Notch glucosylation does not affect Notch ligand binding. Required during early development to promote gastrulation: acts by mediating O-glucosylation of CRB2, which is required for CRB2 localization to the cell membrane. The protein is Protein O-glucosyltransferase 1 (Poglut1) of Rattus norvegicus (Rat).